Reading from the N-terminus, the 264-residue chain is Expansin-B3 (264 aa).

An N-terminal signal peptide occupies residues 1 to 25 (MQLFPVMLATLCIVLQLLIGSSALA). The Expansin-like EG45 domain occupies 54 to 162 (GGACGYGTLV…RRTACKYRGK (109 aa)). Intrachain disulfides connect C57-C86, C89-C157, and C94-C100. Residues 175 to 256 (FWLSLLVEFE…NWAPKATYSS (82 aa)) enclose the Expansin-like CBD domain.

Belongs to the expansin family. Expansin B subfamily.

The protein localises to the secreted. Its subcellular location is the cell wall. The protein resides in the membrane. In terms of biological role, may cause loosening and extension of plant cell walls by disrupting non-covalent bonding between cellulose microfibrils and matrix glucans. No enzymatic activity has been found. This is Expansin-B3 (EXPB3) from Arabidopsis thaliana (Mouse-ear cress).